Consider the following 300-residue polypeptide: Nucleotide-binding protein MCCL_0516 (300 aa).

Position 15-22 (15-22) interacts with ATP; that stretch reads GMSGAGKS. 66-69 provides a ligand contact to GTP; it reads DLRG.

Belongs to the RapZ-like family.

Functionally, displays ATPase and GTPase activities. The chain is Nucleotide-binding protein MCCL_0516 from Macrococcus caseolyticus (strain JCSC5402) (Macrococcoides caseolyticum).